A 334-amino-acid polypeptide reads, in one-letter code: MTTVYYDQDVKTDALQGKKIAVVGYGSQGHAHAQNLKDNGYDVVIGIRPGRSFDKAKEDGFDVFPVAEAVKQADVIMVLLPDEIQGDVYKNEIEPNLEKHNALAFAHGFNIHFGVIQPPADVDVFLVAPKGPGHLVRRTFVEGSAVPSLFGIQQDASGQARNIALSYAKGIGATRAGVIETTFKEETETDLFGEQAVLCGGVSKLIQSGFETLVEAGYQPELAYFEVLHEMKLIVDLMYEGGMENVRYSISNTAEFGDYVSGPRVITPDVKENMKAVLTDIQNGNFSNRFIEDNKNGFKEFYKLREEQHGHQIEKVGRELREMMPFIKSKSIEK.

Residues 1-181 (MTTVYYDQDV…GATRAGVIET (181 aa)) form the KARI N-terminal Rossmann domain. NADP(+) contacts are provided by residues 25 to 28 (YGSQ), arginine 48, serine 52, and 82 to 85 (DEIQ). Histidine 107 is an active-site residue. Glycine 133 is a binding site for NADP(+). In terms of domain architecture, KARI C-terminal knotted spans 182 to 327 (TFKEETETDL…RELREMMPFI (146 aa)). Residues aspartate 190, glutamate 194, glutamate 226, and glutamate 230 each contribute to the Mg(2+) site. Serine 251 provides a ligand contact to substrate.

The protein belongs to the ketol-acid reductoisomerase family. Mg(2+) is required as a cofactor.

The catalysed reaction is (2R)-2,3-dihydroxy-3-methylbutanoate + NADP(+) = (2S)-2-acetolactate + NADPH + H(+). It carries out the reaction (2R,3R)-2,3-dihydroxy-3-methylpentanoate + NADP(+) = (S)-2-ethyl-2-hydroxy-3-oxobutanoate + NADPH + H(+). It participates in amino-acid biosynthesis; L-isoleucine biosynthesis; L-isoleucine from 2-oxobutanoate: step 2/4. Its pathway is amino-acid biosynthesis; L-valine biosynthesis; L-valine from pyruvate: step 2/4. Functionally, involved in the biosynthesis of branched-chain amino acids (BCAA). Catalyzes an alkyl-migration followed by a ketol-acid reduction of (S)-2-acetolactate (S2AL) to yield (R)-2,3-dihydroxy-isovalerate. In the isomerase reaction, S2AL is rearranged via a Mg-dependent methyl migration to produce 3-hydroxy-3-methyl-2-ketobutyrate (HMKB). In the reductase reaction, this 2-ketoacid undergoes a metal-dependent reduction by NADPH to yield (R)-2,3-dihydroxy-isovalerate. The chain is Ketol-acid reductoisomerase (NADP(+)) from Staphylococcus aureus (strain Mu3 / ATCC 700698).